A 274-amino-acid polypeptide reads, in one-letter code: Tyrosinase (274 aa).

Cu cation-binding residues include H38, H54, H63, H190, H194, and H216.

The protein belongs to the tyrosinase family. Cu(2+) is required as a cofactor.

It catalyses the reaction 2 L-dopa + O2 = 2 L-dopaquinone + 2 H2O. The enzyme catalyses L-tyrosine + O2 = L-dopaquinone + H2O. Functionally, this is a copper-containing oxidase that functions in the formation of pigments such as melanins and other polyphenolic compounds. In Streptomyces glaucescens, this protein is Tyrosinase (melC2).